The chain runs to 163 residues: Cyclic pyranopterin monophosphate synthase (163 aa).

Substrate-binding positions include 75-77 (LCH) and 113-114 (ME). Residue Asp-128 is part of the active site.

The protein belongs to the MoaC family. As to quaternary structure, homohexamer; trimer of dimers.

The catalysed reaction is (8S)-3',8-cyclo-7,8-dihydroguanosine 5'-triphosphate = cyclic pyranopterin phosphate + diphosphate. The protein operates within cofactor biosynthesis; molybdopterin biosynthesis. In terms of biological role, catalyzes the conversion of (8S)-3',8-cyclo-7,8-dihydroguanosine 5'-triphosphate to cyclic pyranopterin monophosphate (cPMP). This Magnetococcus marinus (strain ATCC BAA-1437 / JCM 17883 / MC-1) protein is Cyclic pyranopterin monophosphate synthase.